The chain runs to 271 residues: Orotidine 5'-phosphate decarboxylase (271 aa).

The active-site Proton donor is lysine 97.

This sequence belongs to the OMP decarboxylase family. Type 2 subfamily.

It carries out the reaction orotidine 5'-phosphate + H(+) = UMP + CO2. The protein operates within pyrimidine metabolism; UMP biosynthesis via de novo pathway; UMP from orotate: step 2/2. This Leptospira borgpetersenii serovar Hardjo-bovis (strain L550) protein is Orotidine 5'-phosphate decarboxylase.